Here is a 241-residue protein sequence, read N- to C-terminus: Uridylate kinase (241 aa).

12-15 (KISG) is a binding site for ATP. Residues 20-25 (GDKGNG) form an involved in allosteric activation by GTP region. Glycine 54 is a UMP binding site. Residues glycine 55 and arginine 59 each coordinate ATP. UMP contacts are provided by residues aspartate 74 and 135 to 142 (TGNPYFST). Positions 163, 169, and 172 each coordinate ATP.

The protein belongs to the UMP kinase family. In terms of assembly, homohexamer.

Its subcellular location is the cytoplasm. The enzyme catalyses UMP + ATP = UDP + ADP. The protein operates within pyrimidine metabolism; CTP biosynthesis via de novo pathway; UDP from UMP (UMPK route): step 1/1. Its activity is regulated as follows. Allosterically activated by GTP. Inhibited by UTP. Catalyzes the reversible phosphorylation of UMP to UDP. The protein is Uridylate kinase of Lactobacillus helveticus (strain DPC 4571).